The sequence spans 1290 residues: DNA-directed RNA polymerase subunit beta' (1290 aa).

Positions 60, 62, 75, and 78 each coordinate Zn(2+). The Mg(2+) site is built by Asp535, Asp537, and Asp539. 4 residues coordinate Zn(2+): Cys875, Cys953, Cys960, and Cys963.

This sequence belongs to the RNA polymerase beta' chain family. The RNAP catalytic core consists of 2 alpha, 1 beta, 1 beta' and 1 omega subunit. When a sigma factor is associated with the core the holoenzyme is formed, which can initiate transcription. It depends on Mg(2+) as a cofactor. The cofactor is Zn(2+).

It carries out the reaction RNA(n) + a ribonucleoside 5'-triphosphate = RNA(n+1) + diphosphate. In terms of biological role, DNA-dependent RNA polymerase catalyzes the transcription of DNA into RNA using the four ribonucleoside triphosphates as substrates. The protein is DNA-directed RNA polymerase subunit beta' of Nocardioides sp. (strain ATCC BAA-499 / JS614).